The primary structure comprises 457 residues: UDP-N-acetylmuramate--L-alanine ligase (457 aa).

Position 112–118 (112–118) interacts with ATP; sequence GAHGKTS.

This sequence belongs to the MurCDEF family.

The protein localises to the cytoplasm. The catalysed reaction is UDP-N-acetyl-alpha-D-muramate + L-alanine + ATP = UDP-N-acetyl-alpha-D-muramoyl-L-alanine + ADP + phosphate + H(+). It functions in the pathway cell wall biogenesis; peptidoglycan biosynthesis. Functionally, cell wall formation. The polypeptide is UDP-N-acetylmuramate--L-alanine ligase (Desulfosudis oleivorans (strain DSM 6200 / JCM 39069 / Hxd3) (Desulfococcus oleovorans)).